Reading from the N-terminus, the 234-residue chain is tRNA1(Val) (adenine(37)-N6)-methyltransferase (234 aa).

Belongs to the methyltransferase superfamily. tRNA (adenine-N(6)-)-methyltransferase family.

Its subcellular location is the cytoplasm. The enzyme catalyses adenosine(37) in tRNA1(Val) + S-adenosyl-L-methionine = N(6)-methyladenosine(37) in tRNA1(Val) + S-adenosyl-L-homocysteine + H(+). Specifically methylates the adenine in position 37 of tRNA(1)(Val) (anticodon cmo5UAC). This is tRNA1(Val) (adenine(37)-N6)-methyltransferase from Aliivibrio fischeri (strain MJ11) (Vibrio fischeri).